Reading from the N-terminus, the 869-residue chain is Bifunctional uridylyltransferase/uridylyl-removing enzyme (869 aa).

Residues 1-332 (MTDTPAERPD…QFDGEATPEP (332 aa)) form a uridylyltransferase region. Residues 333–691 (LGGGFSLRRG…RRAVPDNDAL (359 aa)) are uridylyl-removing. An HD domain is found at 450-572 (VDQHTLMVLR…VGTRERLDYL (123 aa)). ACT domains are found at residues 692 to 774 (EVFV…RAVP) and 798 to 869 (RISL…LDPV).

The protein belongs to the GlnD family. Mg(2+) is required as a cofactor.

The enzyme catalyses [protein-PII]-L-tyrosine + UTP = [protein-PII]-uridylyl-L-tyrosine + diphosphate. The catalysed reaction is [protein-PII]-uridylyl-L-tyrosine + H2O = [protein-PII]-L-tyrosine + UMP + H(+). With respect to regulation, uridylyltransferase (UTase) activity is inhibited by glutamine, while glutamine activates uridylyl-removing (UR) activity. Its function is as follows. Modifies, by uridylylation and deuridylylation, the PII regulatory proteins (GlnB and homologs), in response to the nitrogen status of the cell that GlnD senses through the glutamine level. Under low glutamine levels, catalyzes the conversion of the PII proteins and UTP to PII-UMP and PPi, while under higher glutamine levels, GlnD hydrolyzes PII-UMP to PII and UMP (deuridylylation). Thus, controls uridylylation state and activity of the PII proteins, and plays an important role in the regulation of nitrogen assimilation and metabolism. The protein is Bifunctional uridylyltransferase/uridylyl-removing enzyme of Xanthomonas euvesicatoria pv. vesicatoria (strain 85-10) (Xanthomonas campestris pv. vesicatoria).